Consider the following 340-residue polypeptide: rRNA adenine N-6-methyltransferase (340 aa).

The segment covering 1-25 has biased composition (low complexity); it reads MAGPQDRPRGRGPSSGRPQRPVGGR. The segment at 1-37 is disordered; that stretch reads MAGPQDRPRGRGPSSGRPQRPVGGRSQRDRDRRVLGQ. S-adenosyl-L-methionine contacts are provided by Asn-38, Leu-40, Gly-65, Glu-86, Asp-111, and Ala-127. The disordered stretch occupies residues 284 to 340; it reads RGGAARGPGDQRGRRGRPGGGPRPDGRAGGGPRRDAGGRRTGDGRGGRPRPPRGGQA. The segment covering 301 to 314 has biased composition (gly residues); it reads PGGGPRPDGRAGGG. Positions 315–329 are enriched in basic and acidic residues; sequence PRRDAGGRRTGDGRG.

This sequence belongs to the class I-like SAM-binding methyltransferase superfamily. rRNA adenine N(6)-methyltransferase family.

Functionally, involved in erythromycin resistance. This chain is rRNA adenine N-6-methyltransferase (ermA), found in Aeromicrobium erythreum (strain ATCC 51598 / DSM 8599 / JCM 8359 / NBRC 15406 / NRRL B-3381).